The following is a 320-amino-acid chain: 3-oxoacyl-[acyl-carrier-protein] reductase 1, chloroplastic (320 aa).

A chloroplast-targeting transit peptide spans 1–60 (MATTVAATKLTSLKAVKKLGFREIRQVRQWSPLQSAMPHFGMLRCGSRQSFATSTVVKAQ). 82-106 (VTGASRGIGKAIALSLGKAGCKVLV) is a binding site for NADP(+). Serine 214 contributes to the substrate binding site. The Proton acceptor role is filled by tyrosine 227.

The protein belongs to the short-chain dehydrogenases/reductases (SDR) family. Homotetramer.

It is found in the plastid. It localises to the chloroplast. It carries out the reaction a (3R)-hydroxyacyl-[ACP] + NADP(+) = a 3-oxoacyl-[ACP] + NADPH + H(+). Its pathway is lipid metabolism; fatty acid biosynthesis. In Brassica napus (Rape), this protein is 3-oxoacyl-[acyl-carrier-protein] reductase 1, chloroplastic (gbkr1).